The primary structure comprises 463 residues: Glucagon-like peptide 1 receptor (463 aa).

An N-terminal signal peptide occupies residues 1-21 (MAVTPSLLRLALLLLGAVGRA). The Extracellular segment spans residues 22–139 (GPRPQGATVS…KQGERNSPEE (118 aa)). 3 disulfides stabilise this stretch: Cys46–Cys71, Cys62–Cys104, and Cys85–Cys126. Residues Asn63, Asn82, and Asn115 are each glycosylated (N-linked (GlcNAc...) asparagine). The chain crosses the membrane as a helical span at residues 140 to 164 (QLLSLYIIYTVGYALSFSALVIASA). Over 165–175 (ILVSFRHLHCT) the chain is Cytoplasmic. Residues 176–201 (RNYIHLNLFASFILRALSVFIKDAAL) form a helical membrane-spanning segment. Topologically, residues 202–227 (KWMYSTAAQQHQWDGLLSYQDSLGCR) are extracellular. Cys226 and Cys296 form a disulfide bridge. Residues 228–251 (LVFLLMQYCVAANYYWLLVEGVYL) form a helical membrane-spanning segment. Topologically, residues 252 to 265 (YTLLAFSVFSEQRI) are cytoplasmic. Residues 266 to 290 (FKLYLSIGWGVPLLFVIPWGIVKYL) traverse the membrane as a helical segment. The Extracellular portion of the chain corresponds to 291-305 (YEDEGCWTRNSNMNY). A helical membrane pass occupies residues 306–328 (WLIIRLPILFAIGVNFLVFIRVI). Residues 329 to 348 (CIVIAKLKANLMCKTDIKCR) lie on the Cytoplasmic side of the membrane. Cys341 carries the post-translational modification ADP-ribosylcysteine. Residue Arg348 is modified to ADP-ribosylarginine. Residues 349–370 (LAKSTLTLIPLLGTHEVIFAFV) form a helical membrane-spanning segment. The important for allosteric inhibitor binding stretch occupies residues 352–355 (STLT). The Extracellular portion of the chain corresponds to 371-383 (MDEHARGTLRFVK). A helical transmembrane segment spans residues 384–404 (LFTELSFTSFQGFMVAVLYCF). Residues 405 to 463 (VNNEVQMEFRKSWERWRLERLNIQRDSSMKPLKCPTSSVSSGATVGSSVYAATCQNSCS) are Cytoplasmic-facing.

The protein belongs to the G-protein coupled receptor 2 family. May form homodimers and heterodimers with GIPR. N-glycosylation enhances cell surface expression and lengthens receptor half-life by preventing degradation in the ER. Pancreatic islets, stomach, lung, rat insulinoma cell line.

The protein resides in the cell membrane. Functionally, G-protein coupled receptor for glucagon-like peptide 1 (GLP-1). Ligand binding triggers activation of a signaling cascade that leads to the activation of adenylyl cyclase and increased intracellular cAMP levels. Plays a role in regulating insulin secretion in response to GLP-1. In Rattus norvegicus (Rat), this protein is Glucagon-like peptide 1 receptor (Glp1r).